Consider the following 414-residue polypeptide: Probable indole-3-pyruvate monooxygenase YUCCA1 (414 aa).

25 to 30 (GAGPSG) is a binding site for FAD. 189–194 (GCGNSG) serves as a coordination point for NADP(+).

This sequence belongs to the FMO family. Requires FAD as cofactor. Expressed in the apical meristems and young floral primordia. Detected in the floral meristems and at the base of the floral organs.

It catalyses the reaction indole-3-pyruvate + NADPH + O2 + H(+) = (indol-3-yl)acetate + CO2 + NADP(+) + H2O. The protein operates within plant hormone metabolism; auxin biosynthesis. In terms of biological role, involved in auxin biosynthesis, but not in the tryptamine or the CYP79B2/B3 branches. Catalyzes in vitro the N-oxidation of tryptamine to form N-hydroxyl tryptamine. Involved during embryogenesis and seedling development. Required for the formation of floral organs and vascular tissues. Belongs to the set of redundant YUCCA genes probably responsible for auxin biosynthesis in shoots. The protein is Probable indole-3-pyruvate monooxygenase YUCCA1 (YUC1) of Arabidopsis thaliana (Mouse-ear cress).